A 468-amino-acid chain; its full sequence is Putative chitinase 1 (468 aa).

The signal sequence occupies residues 1–21 (MDFYSSLLPFLILIYLEFCSG). In terms of domain architecture, GH18 spans 22–381 (FNRVCYYNGW…MSIIHGLGEY (360 aa)). Cys-26 and Cys-51 are joined by a disulfide. Residues 73–74 (VF) and 100–103 (GGWD) contribute to the chitin site. The active-site Proton donor is Glu-143. Residues Tyr-144, 213-216 (KMYD), and Trp-353 each bind chitin. Residues 386 to 440 (SDTLEAEREMINKKIRKAAREISYYSDKGNSTMAKKMEDKLNQLKDHLSAVQAHQ) are a coiled coil.

It belongs to the glycosyl hydrolase 18 family. In terms of tissue distribution, prismatic layer of shell (at protein level). Expressed primarily in the mantle with highest level in the outer epithelium of the mantle edge and lower level in the mantle pallium.

It is found in the secreted. It catalyses the reaction Random endo-hydrolysis of N-acetyl-beta-D-glucosaminide (1-&gt;4)-beta-linkages in chitin and chitodextrins.. The chain is Putative chitinase 1 from Margaritifera margaritifera (Freshwater pearl mussel).